Here is a 267-residue protein sequence, read N- to C-terminus: MKRALALMGLAFLCVLRAGAAQQTVDDACSVQILVPGLKGDAGEKGDKGAPGRPGRVGPTGEKGDVGDKGQKGGVGRHGKIGPIGSKGEKGDSGDIGPPGPNGEPGIPCECSQLRKAIGEMDNQVTQLTAELKFIKNAVAGVRETEQKMYLLVKEEKRYLDAQLACQGRGGTLSMPKDEAANALLAAYITQAGLARVFIGINDLEREGAFVYADRSPMQTFSKWRSGEPNNAYDEEDCVELVASGGWNDVACHLTMHFLCEFDKEHV.

The signal sequence occupies residues 1–21 (MKRALALMGLAFLCVLRAGAA). Residues 40-109 (GDAGEKGDKG…GPNGEPGIPC (70 aa)) are disordered. Basic and acidic residues-rich tracts occupy residues 41–50 (DAGEKGDKGA) and 62–71 (EKGDVGDKGQ). The Collagen-like domain maps to 49–108 (GAPGRPGRVGPTGEKGDVGDKGQKGGVGRHGKIGPIGSKGEKGDSGDIGPPGPNGEPGIP). Residues 110–144 (ECSQLRKAIGEMDNQVTQLTAELKFIKNAVAGVRE) are a coiled coil. Residues 145–261 (TEQKMYLLVK…CHLTMHFLCE (117 aa)) enclose the C-type lectin domain. 2 disulfides stabilise this stretch: Cys166–Cys260 and Cys238–Cys252. Arg196 serves as a coordination point for a carbohydrate. Asp203, Glu207, Glu228, Asn230, Asn231, Asp234, Glu236, and Asp237 together coordinate Ca(2+). An a carbohydrate-binding site is contributed by Glu236. Residues Glu240 and 248–250 (NDV) each bind a carbohydrate. Residues Asn248 and Asp249 each coordinate Ca(2+).

Belongs to the COLEC10/COLEC11 family. As to quaternary structure, homotrimer; disulfide-linked. Interacts with MASP1; probably triggers the lectin pathway of complement.

The protein resides in the secreted. Functionally, lectin that plays a role in innate immunity, apoptosis and embryogenesis. Calcium-dependent lectin that binds self and non-self glycoproteins presenting high mannose oligosaccharides with at least one terminal alpha-1,2-linked mannose epitope. Primarily recognizes the terminal disaccharide of the glycan. Also recognizes a subset of fucosylated glycans and lipopolysaccharides. Plays a role in innate immunity through its ability to bind non-self sugars presented by microorganisms and to activate the complement through the recruitment of MAPS1. Also plays a role in apoptosis through its ability to bind in a calcium-independent manner the DNA present at the surface of apoptotic cells and to activate the complement in response to this binding. Finally, plays a role in development, probably serving as a guidance cue during the migration of neural crest cells and other cell types during embryogenesis. This chain is Collectin-11 (COLEC11), found in Bos taurus (Bovine).